A 185-amino-acid chain; its full sequence is Elongation factor P (185 aa).

The protein belongs to the elongation factor P family.

The protein resides in the cytoplasm. Its pathway is protein biosynthesis; polypeptide chain elongation. In terms of biological role, involved in peptide bond synthesis. Stimulates efficient translation and peptide-bond synthesis on native or reconstituted 70S ribosomes in vitro. Probably functions indirectly by altering the affinity of the ribosome for aminoacyl-tRNA, thus increasing their reactivity as acceptors for peptidyl transferase. In Thermotoga maritima (strain ATCC 43589 / DSM 3109 / JCM 10099 / NBRC 100826 / MSB8), this protein is Elongation factor P (efp).